Here is a 269-residue protein sequence, read N- to C-terminus: Aquaporin-1 (269 aa).

At 1-11 the chain is on the cytoplasmic side; the sequence is MASEIKKKLFW. Residues 12–29 form a helical membrane-spanning segment; it reads RAVVAEFLAMTLFVFISI. Topologically, residues 30–46 are extracellular; that stretch reads GSALGFNYPLERNQTLV. Asparagine 42 carries N-linked (GlcNAc...) asparagine glycosylation. Residues 47–65 form a helical membrane-spanning segment; sequence QDNVKVSLAFGLSIATLAQ. The Cytoplasmic portion of the chain corresponds to 66 to 68; sequence SVG. An intramembrane segment occupies 69–82; it reads HISGAHLNPAVTLG. Residues 76 to 78 carry the NPA 1 motif; it reads NPA. The Cytoplasmic segment spans residues 83 to 90; sequence LLLSCQIS. A helical transmembrane segment spans residues 91-109; it reads ILRAVMYIIAQCVGAIVAS. The Extracellular portion of the chain corresponds to 110–133; it reads AILSGITSSLLENSLGRNDLARGV. Residues 134-153 form a helical membrane-spanning segment; that stretch reads NSGQGLGIEIIGTLQLVLCV. Residues 154–163 are Cytoplasmic-facing; the sequence is LATTDRRRRD. Residues 164–181 form a helical membrane-spanning segment; sequence LGGSAPLAIGLSVALGHL. Residues 182–186 lie on the Extracellular side of the membrane; that stretch reads LAIDY. The stretch at 187–199 is an intramembrane region; it reads TGCGINPARSFGS. The short motif at 192-194 is the NPA 2 element; it reads NPA. Residues 200–206 are Extracellular-facing; the sequence is AVLTRNF. N-linked (GlcNAc...) asparagine glycosylation occurs at asparagine 205. The helical transmembrane segment at 207–224 threads the bilayer; the sequence is SNHWIFWVGPFIGSALAV. Topologically, residues 225 to 269 are cytoplasmic; sequence LIYDFILAPRSSDFTDRMKVWTSGQVEEYDLDADDINSRVEMKPK. The residue at position 247 (serine 247) is a Phosphoserine. Tyrosine 253 bears the Phosphotyrosine mark. Serine 262 bears the Phosphoserine mark.

It belongs to the MIP/aquaporin (TC 1.A.8) family. Homotetramer; each monomer provides an independent water pore. Component of the ankyrin-1 complex in the erythrocyte, composed of ANK1, RHCE, RHAG, SLC4A1, EPB42, GYPA, GYPB and AQP1. Interacts with EPHB2; involved in endolymph production in the inner ear. Identified in a complex with STOM. Interacts (via the N-terminal) with ANK1 (via ANK 1-5 repeats). Interacts (via the C-terminal) with EPB42. As to expression, erythrocytes and renal tubules.

The protein localises to the cell membrane. It carries out the reaction H2O(in) = H2O(out). The catalysed reaction is nitric oxide(out) = nitric oxide(in). It catalyses the reaction CO2(out) = CO2(in). The enzyme catalyses glycerol(in) = glycerol(out). It carries out the reaction H2O2(out) = H2O2(in). The catalysed reaction is K(+)(in) = K(+)(out). It catalyses the reaction Na(+)(in) = Na(+)(out). Functionally, forms a water channel that facilitates the transport of water across cell membranes, playing a crucial role in water homeostasis in various tissues. Could also be permeable to small solutes including hydrogen peroxide, glycerol and gases such as amonnia (NH3), nitric oxide (NO) and carbon dioxide (CO2). Recruited to the ankyrin-1 complex, a multiprotein complex of the erythrocyte membrane, it could be part of a CO2 metabolon, linking facilitated diffusion of CO2 across the membrane, anion exchange of Cl(-)/HCO3(-) and interconversion of dissolved CO2 and carbonic acid in the cytosol. In vitro, it shows non-selective gated cation channel activity and may be permeable to cations like K(+) and Na(+) in vivo. This is Aquaporin-1 from Rattus norvegicus (Rat).